The following is a 529-amino-acid chain: E3 ubiquitin-protein ligase arih1 (529 aa).

2 disordered regions span residues 1-30 and 49-68; these read MDSD…EDDL and GICG…GEEE. The span at 51–64 shows a compositional bias: gly residues; the sequence is CGEGGGSALGPGPG. Residues 77-125 are UBA-like; that stretch reads TAEQILQHMVECIREVNEVIQNPATITRILLSHFNWDKEKLMERYFDGN. The tract at residues 154–365 is TRIAD supradomain; the sequence is QDMPCQICYL…SAWYNCNRYN (212 aa). Zn(2+) contacts are provided by cysteine 158, cysteine 161, cysteine 175, histidine 177, cysteine 180, cysteine 183, cysteine 203, cysteine 208, cysteine 248, cysteine 253, cysteine 269, cysteine 271, cysteine 276, cysteine 279, histidine 284, cysteine 289, cysteine 316, and cysteine 319. The RING-type 1 zinc finger occupies 158 to 208; the sequence is CQICYLNYPNSYFTGLECGHKFCMQCWSEYLTTKIIEEGMGQTISCPAHGC. The segment at 228–289 adopts an IBR-type zinc-finger fold; sequence LKYQHLITNS…GENWHDPVKC (62 aa). The RING-type 2; atypical zinc-finger motif lies at 316 to 347; it reads CPKCHVTIEKDGGCNHMVCRNQNCKAEFCWVC. Residue cysteine 329 is part of the active site. 6 residues coordinate Zn(2+): cysteine 334, cysteine 339, cysteine 344, cysteine 347, histidine 354, and cysteine 361. Residues 380-529 form an ariadne domain region; the sequence is RAALQRYLFY…EKDLWEYIED (150 aa).

Belongs to the RBR family. Ariadne subfamily. Interacts (via the first RING-type zinc finger) with ube2l3. Associates with cullin-RING ubiquitin ligase (CRL) complexes containing neddylated cullin.

The protein resides in the cytoplasm. The protein localises to the nucleus. The enzyme catalyses [E2 ubiquitin-conjugating enzyme]-S-ubiquitinyl-L-cysteine + [acceptor protein]-L-lysine = [E2 ubiquitin-conjugating enzyme]-L-cysteine + [acceptor protein]-N(6)-ubiquitinyl-L-lysine.. It functions in the pathway protein modification; protein ubiquitination. Its activity is regulated as follows. Autoinhibited by the ariadne domain, which masks the second RING-type zinc finger that contains the active site and inhibits the E3 activity. Inhibition is relieved upon binding to neddylated cullin-RING ubiquitin ligase complexes, which activate the E3 ligase activity of ARIH1. In terms of biological role, E3 ubiquitin-protein ligase, which catalyzes ubiquitination of target proteins together with ubiquitin-conjugating enzyme E2 ube2l3. Acts as an atypical E3 ubiquitin-protein ligase by working together with cullin-RING ubiquitin ligase (CRL) complexes and initiating ubiquitination of CRL substrates: associates with CRL complexes and specifically mediates addition of the first ubiquitin on CRLs targets. The initial ubiquitin is then elongated. E3 ubiquitin-protein ligase activity is activated upon binding to neddylated cullin-RING ubiquitin ligase complexes. The chain is E3 ubiquitin-protein ligase arih1 (arih1) from Xenopus tropicalis (Western clawed frog).